A 175-amino-acid polypeptide reads, in one-letter code: Peptide deformylase (175 aa).

Fe cation contacts are provided by Cys-99 and His-141. Glu-142 is a catalytic residue. His-145 contributes to the Fe cation binding site.

Belongs to the polypeptide deformylase family. Fe(2+) serves as cofactor.

The enzyme catalyses N-terminal N-formyl-L-methionyl-[peptide] + H2O = N-terminal L-methionyl-[peptide] + formate. In terms of biological role, removes the formyl group from the N-terminal Met of newly synthesized proteins. Requires at least a dipeptide for an efficient rate of reaction. N-terminal L-methionine is a prerequisite for activity but the enzyme has broad specificity at other positions. This Rickettsia typhi (strain ATCC VR-144 / Wilmington) protein is Peptide deformylase.